Reading from the N-terminus, the 392-residue chain is 8-amino-7-oxononanoate synthase (392 aa).

Residue Arg-21 participates in substrate binding. 114–115 (GY) provides a ligand contact to pyridoxal 5'-phosphate. His-139 contacts substrate. Pyridoxal 5'-phosphate contacts are provided by residues Ser-187, 212–215 (DEAH), and 243–246 (TFGK). The residue at position 246 (Lys-246) is an N6-(pyridoxal phosphate)lysine. Residue Thr-359 coordinates substrate.

This sequence belongs to the class-II pyridoxal-phosphate-dependent aminotransferase family. BioF subfamily. As to quaternary structure, homodimer. Pyridoxal 5'-phosphate serves as cofactor.

It catalyses the reaction 6-carboxyhexanoyl-[ACP] + L-alanine + H(+) = (8S)-8-amino-7-oxononanoate + holo-[ACP] + CO2. It functions in the pathway cofactor biosynthesis; biotin biosynthesis. Its function is as follows. Catalyzes the decarboxylative condensation of pimeloyl-[acyl-carrier protein] and L-alanine to produce 8-amino-7-oxononanoate (AON), [acyl-carrier protein], and carbon dioxide. This chain is 8-amino-7-oxononanoate synthase, found in Chlorobaculum parvum (strain DSM 263 / NCIMB 8327) (Chlorobium vibrioforme subsp. thiosulfatophilum).